Consider the following 680-residue polypeptide: ABC transporter B family member 24, mitochondrial (680 aa).

Residues 1–75 (MMRVSQLQLC…MFFSTSTSAP (75 aa)) constitute a mitochondrion transit peptide. Residues 108–402 (VISAFACLVG…LGVVYSDTVQ (295 aa)) enclose the ABC transmembrane type-1 domain. 6 helical membrane passes run 109-129 (ISAF…PFLF), 145-165 (NPYL…YGIA), 232-252 (AMVF…CILA), 255-275 (FGAV…AFTL), 340-360 (FALL…TAMV), and 376-396 (LVMV…LGVV). The ABC transporter domain occupies 439 to 673 (ISFENVHFSY…SGRYAKLWTQ (235 aa)). Residues Tyr448 and 472–483 (GSSGSGKSTILR) each bind ATP.

The protein belongs to the ABC transporter superfamily. ABCB family. Heavy Metal importer (TC 3.A.1.210) subfamily. In terms of assembly, homodimer. In terms of tissue distribution, mostly expressed at low levels in roots and flowers.

The protein resides in the mitochondrion inner membrane. Its function is as follows. Performs an essential function in the generation of cytoplasmic iron-sulfur proteins by mediating export of Fe/S cluster precursors synthesized by NFS1 and other mitochondrial proteins. Not involved in the export of cyclic pyranopterin monophosphate (cPMP) from mitochondria to the cytosol. This Arabidopsis thaliana (Mouse-ear cress) protein is ABC transporter B family member 24, mitochondrial (ABCB24).